The chain runs to 244 residues: MILFPAIDLKNGQCVRLEQGDMARATVFNLDPAAQAKSFADQGFEYLHVVDLDGAFAGKPMNAQAVEAMLKIVKMPVQLGGGIRDLKTVEAWLGKGITRVIIGTAAVRDPELVKMAAKAFPGRVAVGLDARDGKVAVEGWAETSEVTALDIAKRFEDAGVAAIIFTDIARDGLLKGLNLDATIALGDAISIPVIASGGLASIEDVKAMLTPRARKLEGAIAGRALYDGRLDPAEALALIRAISG.

Residue aspartate 8 is the Proton acceptor of the active site. The Proton donor role is filled by aspartate 129.

This sequence belongs to the HisA/HisF family.

The protein resides in the cytoplasm. The catalysed reaction is 1-(5-phospho-beta-D-ribosyl)-5-[(5-phospho-beta-D-ribosylamino)methylideneamino]imidazole-4-carboxamide = 5-[(5-phospho-1-deoxy-D-ribulos-1-ylimino)methylamino]-1-(5-phospho-beta-D-ribosyl)imidazole-4-carboxamide. It participates in amino-acid biosynthesis; L-histidine biosynthesis; L-histidine from 5-phospho-alpha-D-ribose 1-diphosphate: step 4/9. This is 1-(5-phosphoribosyl)-5-[(5-phosphoribosylamino)methylideneamino] imidazole-4-carboxamide isomerase from Bradyrhizobium sp. (strain ORS 278).